Consider the following 117-residue polypeptide: Large ribosomal subunit protein uL18 (117 aa).

The protein belongs to the universal ribosomal protein uL18 family. In terms of assembly, part of the 50S ribosomal subunit; part of the 5S rRNA/L5/L18/L25 subcomplex. Contacts the 5S and 23S rRNAs.

Functionally, this is one of the proteins that bind and probably mediate the attachment of the 5S RNA into the large ribosomal subunit, where it forms part of the central protuberance. The polypeptide is Large ribosomal subunit protein uL18 (Vibrio vulnificus (strain CMCP6)).